Reading from the N-terminus, the 283-residue chain is Shikimate kinase (283 aa).

86–96 contacts ATP; sequence PIKSGLSSSSA.

It belongs to the GHMP kinase family. Archaeal shikimate kinase subfamily.

The protein resides in the cytoplasm. It catalyses the reaction shikimate + ATP = 3-phosphoshikimate + ADP + H(+). It participates in metabolic intermediate biosynthesis; chorismate biosynthesis; chorismate from D-erythrose 4-phosphate and phosphoenolpyruvate: step 5/7. This chain is Shikimate kinase, found in Methanococcus maripaludis (strain C6 / ATCC BAA-1332).